The following is a 400-amino-acid chain: MIIKPKIRGFICTTTHPVGCEANVKEQIELTKAKGKIANGPKRVLVVGSSSGYGLSSRIAAAFGSDAATLGVFFEKPSSETKPGTAGWYNTAAFDKFAKAEGLYSKSINCDAFSHEAKKKAIELIKEDLGQVDMVVYSLASPVRKLPDSGELIRSSLKPIGETYTATAVDTNKDCIIQTSVEPATEQEIADTVTVMGGEDWELWINALSDAGVLSDNCKTVAYSYIGTELTWPIYWHGALGKAKMDLDRAAHALNDKLAVKGGSANVAVLKSVVTQASSAIPVMPLYIAMVFKKMRQEGLHEGCMDQIYRMFSERLYRTDGAAPATDDKQRLRLDDWELREDIQQHCRDLWPQVTTENLSELADYMEYKAEFLKLFGFGIEGIDYDADVNPNVSFDVIEL.

NAD(+) contacts are provided by residues 48-53, 74-75, 111-112, and 139-140; these read GSSSGY, FE, DA, and LA. Position 225 (tyrosine 225) interacts with substrate. Residue tyrosine 235 is the Proton donor of the active site. NAD(+) is bound by residues lysine 244 and 273-275; that span reads VVT.

This sequence belongs to the TER reductase family. In terms of assembly, monomer.

It carries out the reaction a 2,3-saturated acyl-[ACP] + NAD(+) = a (2E)-enoyl-[ACP] + NADH + H(+). It participates in lipid metabolism; fatty acid biosynthesis. In terms of biological role, involved in the final reduction of the elongation cycle of fatty acid synthesis (FAS II). Catalyzes the reduction of a carbon-carbon double bond in an enoyl moiety that is covalently linked to an acyl carrier protein (ACP). The chain is Enoyl-[acyl-carrier-protein] reductase [NADH] from Shewanella denitrificans (strain OS217 / ATCC BAA-1090 / DSM 15013).